A 61-amino-acid chain; its full sequence is Small ribosomal subunit protein uS14 (61 aa).

Zn(2+) is bound by residues cysteine 24, cysteine 27, cysteine 40, and cysteine 43.

It belongs to the universal ribosomal protein uS14 family. Zinc-binding uS14 subfamily. In terms of assembly, part of the 30S ribosomal subunit. Contacts proteins S3 and S10. The cofactor is Zn(2+).

Binds 16S rRNA, required for the assembly of 30S particles and may also be responsible for determining the conformation of the 16S rRNA at the A site. This Syntrophobacter fumaroxidans (strain DSM 10017 / MPOB) protein is Small ribosomal subunit protein uS14.